The chain runs to 197 residues: Guanylate kinase (197 aa).

The Guanylate kinase-like domain occupies 9-188; it reads GRLVVFSAPS…AVEAVILAIS (180 aa). 16–23 is an ATP binding site; the sequence is APSGTGKS.

This sequence belongs to the guanylate kinase family.

Its subcellular location is the cytoplasm. It carries out the reaction GMP + ATP = GDP + ADP. Its function is as follows. Essential for recycling GMP and indirectly, cGMP. The sequence is that of Guanylate kinase from Chlorobium luteolum (strain DSM 273 / BCRC 81028 / 2530) (Pelodictyon luteolum).